The following is a 341-amino-acid chain: tRNA N6-adenosine threonylcarbamoyltransferase (341 aa).

Residues His-111 and His-115 each contribute to the Fe cation site. Substrate contacts are provided by residues Leu-134–Gly-138, Asp-167, Gly-180, and Asn-274. Asp-302 contributes to the Fe cation binding site.

This sequence belongs to the KAE1 / TsaD family. Fe(2+) is required as a cofactor.

The protein resides in the cytoplasm. It catalyses the reaction L-threonylcarbamoyladenylate + adenosine(37) in tRNA = N(6)-L-threonylcarbamoyladenosine(37) in tRNA + AMP + H(+). In terms of biological role, required for the formation of a threonylcarbamoyl group on adenosine at position 37 (t(6)A37) in tRNAs that read codons beginning with adenine. Is involved in the transfer of the threonylcarbamoyl moiety of threonylcarbamoyl-AMP (TC-AMP) to the N6 group of A37, together with TsaE and TsaB. TsaD likely plays a direct catalytic role in this reaction. This is tRNA N6-adenosine threonylcarbamoyltransferase from Paraburkholderia phymatum (strain DSM 17167 / CIP 108236 / LMG 21445 / STM815) (Burkholderia phymatum).